The following is a 250-amino-acid chain: Small ribosomal subunit protein uS2 (250 aa).

Residues 226-250 (DQQNRQELGEDLGAAVEPAAEEALA) are disordered. A compositionally biased stretch (low complexity) spans 239 to 250 (AAVEPAAEEALA).

The protein belongs to the universal ribosomal protein uS2 family.

The protein is Small ribosomal subunit protein uS2 (rpsB) of Zymomonas mobilis subsp. mobilis (strain ATCC 31821 / ZM4 / CP4).